The sequence spans 446 residues: Putative ZDHHC-type palmitoyltransferase 2 (446 aa).

Disordered stretches follow at residues 1–33 and 56–83; these read MNLY…INNN and QIIN…HNNP. N-linked (GlcNAc...) asparagine glycans are attached at residues asparagine 5, asparagine 8, asparagine 14, and asparagine 21. Over residues 56–81 the composition is skewed to low complexity; that stretch reads QIINKNNNNNHNRNNNNNNNNNNNHN. Asparagine 141, asparagine 145, asparagine 159, and asparagine 165 each carry an N-linked (GlcNAc...) asparagine glycan. The next 5 membrane-spanning stretches (helical) occupy residues 178–198, 210–230, 305–325, 349–369, and 410–430; these read IVIF…IFPW, IHSF…YLCS, YFVL…TLLI, LFLL…IMAL, and IISN…LPTI. The DHHC domain occupies 261 to 311; sequence KWCNKCNHQKPERAHHCRYCNRCVLRMDHHCQWLQNCIGLFNQKYFVLFLF.

The protein belongs to the DHHC palmitoyltransferase family.

It is found in the membrane. It catalyses the reaction L-cysteinyl-[protein] + hexadecanoyl-CoA = S-hexadecanoyl-L-cysteinyl-[protein] + CoA. The sequence is that of Putative ZDHHC-type palmitoyltransferase 2 from Dictyostelium discoideum (Social amoeba).